Reading from the N-terminus, the 280-residue chain is Putative pyruvate, phosphate dikinase regulatory protein (280 aa).

Position 153 to 160 (153 to 160 (GISRTSKT)) interacts with ADP.

This sequence belongs to the pyruvate, phosphate/water dikinase regulatory protein family. PDRP subfamily.

It catalyses the reaction N(tele)-phospho-L-histidyl/L-threonyl-[pyruvate, phosphate dikinase] + ADP = N(tele)-phospho-L-histidyl/O-phospho-L-threonyl-[pyruvate, phosphate dikinase] + AMP + H(+). The enzyme catalyses N(tele)-phospho-L-histidyl/O-phospho-L-threonyl-[pyruvate, phosphate dikinase] + phosphate + H(+) = N(tele)-phospho-L-histidyl/L-threonyl-[pyruvate, phosphate dikinase] + diphosphate. Its function is as follows. Bifunctional serine/threonine kinase and phosphorylase involved in the regulation of the pyruvate, phosphate dikinase (PPDK) by catalyzing its phosphorylation/dephosphorylation. The sequence is that of Putative pyruvate, phosphate dikinase regulatory protein from Bartonella quintana (strain Toulouse) (Rochalimaea quintana).